The chain runs to 34 residues: Trypsin inhibitor (34 aa).

2 cysteine pairs are disulfide-bonded: Cys-7-Cys-29 and Cys-11-Cys-25.

The protein resides in the secreted. Its function is as follows. Inhibits trypsin. This chain is Trypsin inhibitor, found in Veronica hederifolia (Ivy-leaved speedwell).